A 775-amino-acid chain; its full sequence is Semaphorin-3E (775 aa).

An N-terminal signal peptide occupies residues 1–25; the sequence is MASAGHIITLLLWGYLLELWTGGHT. A Sema domain is found at 32 to 516; sequence RLRLSHKELL…SASAVAQVRF (485 aa). N-linked (GlcNAc...) asparagine glycosylation occurs at asparagine 44. Cysteine 105 and cysteine 115 are joined by a disulfide. N-linked (GlcNAc...) asparagine glycosylation is present at asparagine 126. 4 cysteine pairs are disulfide-bonded: cysteine 133/cysteine 142, cysteine 270/cysteine 382, cysteine 294/cysteine 342, and cysteine 519/cysteine 537. Residue asparagine 330 is glycosylated (N-linked (GlcNAc...) asparagine). The region spanning 581–669 is the Ig-like C2-type domain; the sequence is ALDKTEEHLA…SFVHTVRKIT (89 aa). Asparagine 595 and asparagine 596 each carry an N-linked (GlcNAc...) asparagine glycan. The cysteines at positions 654 and 729 are disulfide-linked. Residues 742-775 form a disordered region; that stretch reads LKMSPSKWKYANPQEKKLRSKPEHYRLPRHTLDS. Over residues 755–775 the composition is skewed to basic and acidic residues; that stretch reads QEKKLRSKPEHYRLPRHTLDS.

It belongs to the semaphorin family. As to quaternary structure, interacts with PLXND1.

It localises to the secreted. Functionally, plays an important role in signaling via the cell surface receptor PLXND1. Mediates reorganization of the actin cytoskeleton, leading to the retraction of cell projections. Promotes focal adhesion disassembly and inhibits adhesion of endothelial cells to the extracellular matrix. Regulates angiogenesis, both during embryogenesis and after birth. Can down-regulate sprouting angiogenesis. Required for normal vascular patterning during embryogenesis. Plays an important role in ensuring the specificity of synapse formation. The polypeptide is Semaphorin-3E (SEMA3E) (Homo sapiens (Human)).